The chain runs to 396 residues: Probable circularly permuted 1,3-beta-glucanase YJL171C (396 aa).

Positions 1 to 19 (MLQSIVLSVCMFMLHTVAA) are cleaved as a signal peptide. 7 N-linked (GlcNAc...) asparagine glycosylation sites follow: asparagine 51, asparagine 99, asparagine 122, asparagine 146, asparagine 174, asparagine 219, and asparagine 249. Residues 259-264 (EYDIFE) carry the ExDxxE motif motif. Residues asparagine 267, asparagine 300, asparagine 328, and asparagine 346 are each glycosylated (N-linked (GlcNAc...) asparagine). A lipid anchor (GPI-anchor amidated asparagine) is attached at asparagine 368. Positions 369-396 (GVALTKMQNGVWYYILAIFTAFTQVVLI) are cleaved as a propeptide — removed in mature form.

Belongs to the PGA52 family. Extensively N-glycosylated.

It is found in the cell membrane. The enzyme catalyses Hydrolysis of (1-&gt;3)-beta-D-glucosidic linkages in (1-&gt;3)-beta-D-glucans.. Functionally, probable circularly permuted 1,3-beta-glucanase involved in cell wall modification through beta-1,3-glucan network alterations such as increased branching or remodeling. This is Probable circularly permuted 1,3-beta-glucanase YJL171C (TOH1) from Saccharomyces cerevisiae (strain ATCC 204508 / S288c) (Baker's yeast).